A 21-amino-acid polypeptide reads, in one-letter code: Large ribosomal subunit protein uL30 (21 aa).

A compositionally biased stretch (polar residues) spans 1–15 (AKTENKTVTVRQTAS). A disordered region spans residues 1–21 (AKTENKTVTVRQTASPIXXXK).

This sequence belongs to the universal ribosomal protein uL30 family. As to quaternary structure, part of the 50S ribosomal subunit.

The protein is Large ribosomal subunit protein uL30 (rpmD) of Brevundimonas diminuta (Pseudomonas diminuta).